The chain runs to 149 residues: Nucleoside diphosphate kinase 1 (149 aa).

Position 1 is an N-acetylmethionine (Met1). Residues Lys9, Phe57, Arg85, Thr91, Arg102, and Asn112 each coordinate ATP. Catalysis depends on His115, which acts as the Pros-phosphohistidine intermediate.

This sequence belongs to the NDK family. As to quaternary structure, interacts with CAT1, CAT2 and CAT3. The cofactor is Mg(2+).

It is found in the peroxisome. It localises to the nucleus. Its subcellular location is the cytoplasm. It carries out the reaction a 2'-deoxyribonucleoside 5'-diphosphate + ATP = a 2'-deoxyribonucleoside 5'-triphosphate + ADP. The enzyme catalyses a ribonucleoside 5'-diphosphate + ATP = a ribonucleoside 5'-triphosphate + ADP. Major role in the synthesis of nucleoside triphosphates other than ATP. The ATP gamma phosphate is transferred to the NDP beta phosphate via a ping-pong mechanism, using a phosphorylated active-site intermediate. Plays a role in response to reactive oxygen species (ROS) stress. The sequence is that of Nucleoside diphosphate kinase 1 (NDK1) from Arabidopsis thaliana (Mouse-ear cress).